The chain runs to 121 residues: Splicing factor 3B subunit 6 (121 aa).

Residues 12–25 (EVNRLLYVRNLPYK) are interaction with pre-mRNA branch site. Positions 15 to 90 (RLLYVRNLPY…RYLVVLYYQS (76 aa)) constitute an RRM domain.

The protein belongs to the SF3B6 family. In terms of assembly, component of splicing factor SF3B complex. Component of the U11/U12 snRNPs that are part of the U12-type spliceosome.

Its subcellular location is the nucleus. Involved in pre-mRNA splicing as a component of the splicing factor SF3B complex. SF3B complex is required for 'A' complex assembly formed by the stable binding of U2 snRNP to the branchpoint sequence (BPS) in pre-mRNA. Directly contacts the pre-mRNA branch site adenosine for the first catalytic step of splicing. Enters the spliceosome and associates with the pre-mRNA branch site as part of the 17S U2 or, in the case of the minor spliceosome, as part of the 18S U11/U12 snRNP complex, and thus may facilitate the interaction of these snRNP with the branch sites of U2 and U12 respectively. The sequence is that of Splicing factor 3B subunit 6 from Drosophila melanogaster (Fruit fly).